A 236-amino-acid chain; its full sequence is UPF0257 lipoprotein YnfC (236 aa).

Positions 1–16 (MKKPLLLTLLCMILAG) are cleaved as a signal peptide. Cysteine 17 carries the N-palmitoyl cysteine lipid modification. Cysteine 17 carries the S-diacylglycerol cysteine lipid modification.

The protein belongs to the UPF0257 family.

It is found in the cell membrane. This is UPF0257 lipoprotein YnfC from Salmonella paratyphi C (strain RKS4594).